The following is a 310-amino-acid chain: Uridine phosphorylase 1 (310 aa).

Residues glycine 60, arginine 94, and arginine 138–threonine 141 contribute to the phosphate site. Residues serine 142–glycine 143 and glutamine 217–arginine 219 each bind uridine.

This sequence belongs to the PNP/UDP phosphorylase family. In terms of assembly, homodimer.

The catalysed reaction is uridine + phosphate = alpha-D-ribose 1-phosphate + uracil. It catalyses the reaction 2'-deoxyuridine + phosphate = 2-deoxy-alpha-D-ribose 1-phosphate + uracil. Its pathway is pyrimidine metabolism; UMP biosynthesis via salvage pathway; uracil from uridine (phosphorylase route): step 1/1. Functionally, catalyzes the reversible phosphorylytic cleavage of uridine to uracil and ribose-1-phosphate which can then be utilized as carbon and energy sources or in the rescue of pyrimidine bases for nucleotide synthesis. Shows broad substrate specificity and can also accept deoxyuridine and other analogous compounds. The polypeptide is Uridine phosphorylase 1 (Homo sapiens (Human)).